Here is a 95-residue protein sequence, read N- to C-terminus: Aspartyl/glutamyl-tRNA(Asn/Gln) amidotransferase subunit C (95 aa).

Belongs to the GatC family. As to quaternary structure, heterotrimer of A, B and C subunits.

The enzyme catalyses L-glutamyl-tRNA(Gln) + L-glutamine + ATP + H2O = L-glutaminyl-tRNA(Gln) + L-glutamate + ADP + phosphate + H(+). The catalysed reaction is L-aspartyl-tRNA(Asn) + L-glutamine + ATP + H2O = L-asparaginyl-tRNA(Asn) + L-glutamate + ADP + phosphate + 2 H(+). Its function is as follows. Allows the formation of correctly charged Asn-tRNA(Asn) or Gln-tRNA(Gln) through the transamidation of misacylated Asp-tRNA(Asn) or Glu-tRNA(Gln) in organisms which lack either or both of asparaginyl-tRNA or glutaminyl-tRNA synthetases. The reaction takes place in the presence of glutamine and ATP through an activated phospho-Asp-tRNA(Asn) or phospho-Glu-tRNA(Gln). This Caldanaerobacter subterraneus subsp. tengcongensis (strain DSM 15242 / JCM 11007 / NBRC 100824 / MB4) (Thermoanaerobacter tengcongensis) protein is Aspartyl/glutamyl-tRNA(Asn/Gln) amidotransferase subunit C.